A 920-amino-acid chain; its full sequence is GTPase activating protein homolog 1 (920 aa).

The span at 65–87 shows a compositional bias: low complexity; sequence NLGGLSNDSTNNNSNSNNTIDSS. The interval 65 to 91 is disordered; the sequence is NLGGLSNDSTNNNSNSNNTIDSSKPLS. Residues 90–344 form the F-BAR domain; sequence LSFENDMSDG…FVDIIDPEVD (255 aa). A coiled-coil region spans residues 184–276; sequence LNEAIKDMEK…EDEYKEQINE (93 aa). Residues 403–449 show a composition bias toward low complexity; it reads TNTITSQSGSTIISNGASQPIEIPSPQPISEQQQIPPQQQQQQQQAQ. Disordered stretches follow at residues 403-468 and 490-518; these read TNTI…PMGR and STSS…LSKS. Residues 450-468 are compositionally biased toward polar residues; that stretch reads VPPTSINQSSSPPVNPMGR. Over residues 490–513 the composition is skewed to low complexity; sequence STSSLLTKDGNSTTSSNTSTSNSN. In terms of domain architecture, Rho-GAP spans 533-716; sequence VELEVLIEND…NMIIDSLETK (184 aa). Residues 727-836 are disordered; that stretch reads PIIPDDENSD…VSSNGNNINS (110 aa). The span at 730–741 shows a compositional bias: acidic residues; it reads PDDENSDDDDDD. Low complexity predominate over residues 757–836; that stretch reads NDINTTNINN…VSSNGNNINS (80 aa).

Its subcellular location is the cytoplasm. The protein localises to the contractile vacuole. In terms of biological role, rho GTPase-activating protein involved in the signal transduction pathway. Regulator of the contractile vacuole network as well as involved in driving vacuole emptying. This chain is GTPase activating protein homolog 1 (mgp1), found in Dictyostelium discoideum (Social amoeba).